The chain runs to 487 residues: Protein nucleotidyltransferase YdiU (487 aa).

The ATP site is built by Gly-91, Gly-93, Arg-94, Lys-114, Asp-126, Gly-127, Arg-177, and Arg-184. Asp-253 (proton acceptor) is an active-site residue. Asn-254 and Asp-263 together coordinate Mg(2+). Asp-263 serves as a coordination point for ATP.

This sequence belongs to the SELO family. Mg(2+) serves as cofactor. Requires Mn(2+) as cofactor.

The catalysed reaction is L-seryl-[protein] + ATP = 3-O-(5'-adenylyl)-L-seryl-[protein] + diphosphate. The enzyme catalyses L-threonyl-[protein] + ATP = 3-O-(5'-adenylyl)-L-threonyl-[protein] + diphosphate. It catalyses the reaction L-tyrosyl-[protein] + ATP = O-(5'-adenylyl)-L-tyrosyl-[protein] + diphosphate. It carries out the reaction L-histidyl-[protein] + UTP = N(tele)-(5'-uridylyl)-L-histidyl-[protein] + diphosphate. The catalysed reaction is L-seryl-[protein] + UTP = O-(5'-uridylyl)-L-seryl-[protein] + diphosphate. The enzyme catalyses L-tyrosyl-[protein] + UTP = O-(5'-uridylyl)-L-tyrosyl-[protein] + diphosphate. Nucleotidyltransferase involved in the post-translational modification of proteins. It can catalyze the addition of adenosine monophosphate (AMP) or uridine monophosphate (UMP) to a protein, resulting in modifications known as AMPylation and UMPylation. The chain is Protein nucleotidyltransferase YdiU from Yersinia pestis (strain Pestoides F).